The primary structure comprises 289 residues: 4-diphosphocytidyl-2-C-methyl-D-erythritol kinase (289 aa).

Residue K10 is part of the active site. An ATP-binding site is contributed by 94-104; that stretch reads PVAAGLAGGSS. The active site involves D136.

This sequence belongs to the GHMP kinase family. IspE subfamily.

It catalyses the reaction 4-CDP-2-C-methyl-D-erythritol + ATP = 4-CDP-2-C-methyl-D-erythritol 2-phosphate + ADP + H(+). The protein operates within isoprenoid biosynthesis; isopentenyl diphosphate biosynthesis via DXP pathway; isopentenyl diphosphate from 1-deoxy-D-xylulose 5-phosphate: step 3/6. Functionally, catalyzes the phosphorylation of the position 2 hydroxy group of 4-diphosphocytidyl-2C-methyl-D-erythritol. In Bacillus anthracis (strain CDC 684 / NRRL 3495), this protein is 4-diphosphocytidyl-2-C-methyl-D-erythritol kinase.